Reading from the N-terminus, the 184-residue chain is TATA-box-binding protein (184 aa).

2 consecutive repeat copies span residues 9–85 (IENI…IDKL) and 100–178 (VQNI…KKEL).

The protein belongs to the TBP family.

Functionally, general factor that plays a role in the activation of archaeal genes transcribed by RNA polymerase. Binds specifically to the TATA box promoter element which lies close to the position of transcription initiation. In Thermoplasma volcanium (strain ATCC 51530 / DSM 4299 / JCM 9571 / NBRC 15438 / GSS1), this protein is TATA-box-binding protein.